Consider the following 462-residue polypeptide: L-seryl-tRNA(Sec) selenium transferase (462 aa).

Position 293 is an N6-(pyridoxal phosphate)lysine (lysine 293).

Belongs to the SelA family. Pyridoxal 5'-phosphate is required as a cofactor.

The protein resides in the cytoplasm. It carries out the reaction L-seryl-tRNA(Sec) + selenophosphate + H(+) = L-selenocysteinyl-tRNA(Sec) + phosphate. The protein operates within aminoacyl-tRNA biosynthesis; selenocysteinyl-tRNA(Sec) biosynthesis; selenocysteinyl-tRNA(Sec) from L-seryl-tRNA(Sec) (bacterial route): step 1/1. In terms of biological role, converts seryl-tRNA(Sec) to selenocysteinyl-tRNA(Sec) required for selenoprotein biosynthesis. The polypeptide is L-seryl-tRNA(Sec) selenium transferase (Clostridium botulinum (strain Okra / Type B1)).